The primary structure comprises 301 residues: GTPase Era (301 aa).

Residues 8-174 (KSGFVALVGR…LKTLKDYLPE (167 aa)) enclose the Era-type G domain. The segment at 16–23 (GRPNVGKS) is G1. Residue 16-23 (GRPNVGKS) participates in GTP binding. A G2 region spans residues 42–46 (QTTRN). Positions 63–66 (DTPG) are G3. GTP-binding positions include 63-67 (DTPGI) and 124-127 (NKID). Positions 124–127 (NKID) are G4. Positions 153–155 (ISA) are G5. Positions 197-282 (IREQILRLTD…NLKLWVKVRR (86 aa)) constitute a KH type-2 domain.

The protein belongs to the TRAFAC class TrmE-Era-EngA-EngB-Septin-like GTPase superfamily. Era GTPase family. As to quaternary structure, monomer.

It localises to the cytoplasm. The protein localises to the cell membrane. Its function is as follows. An essential GTPase that binds both GDP and GTP, with rapid nucleotide exchange. Plays a role in 16S rRNA processing and 30S ribosomal subunit biogenesis and possibly also in cell cycle regulation and energy metabolism. The chain is GTPase Era from Lactobacillus delbrueckii subsp. bulgaricus (strain ATCC 11842 / DSM 20081 / BCRC 10696 / JCM 1002 / NBRC 13953 / NCIMB 11778 / NCTC 12712 / WDCM 00102 / Lb 14).